Consider the following 373-residue polypeptide: 3',5'-bisphosphate nucleotidase AHL (373 aa).

Asp52 serves as the catalytic Proton acceptor. Mg(2+) is bound by residues Glu77, Asp144, Val146, and Asp147. The Proton acceptor role is filled by Thr149. Positions 149, 281, 284, 298, and 310 each coordinate adenosine 3',5'-bisphosphate. Ser281, Lys284, Lys298, and Asp310 together coordinate AMP. Asp310 is a Mg(2+) binding site.

This sequence belongs to the inositol monophosphatase superfamily. Requires Mg(2+) as cofactor. Expressed in roots, leaves, stems, flowers and siliques.

It carries out the reaction adenosine 3',5'-bisphosphate + H2O = AMP + phosphate. The enzyme catalyses 3'-phosphoadenylyl sulfate + H2O = adenosine 5'-phosphosulfate + phosphate. With respect to regulation, inhibited by Li(+) (IC(50)=10 mM), Na(+) (IC(50)=50 mM) and Ca(2+) (IC(50)=0.06 mM). Functionally, phosphatase that converts adenosine 3'-phosphate 5'-phosphosulfate (PAPS) to adenosine 5'-phosphosulfate (APS) and 3'-phosphoadenosine 5'-phosphate (3'-PAP) to AMP. May regulate the flux of sulfur in the sulfur-activation pathway by converting PAPS to APS. Prevents both the toxicity of PAP on RNA processing enzymes as well as the product inhibition by PAP of sulfate conjugation. The polypeptide is 3',5'-bisphosphate nucleotidase AHL (Arabidopsis thaliana (Mouse-ear cress)).